Reading from the N-terminus, the 220-residue chain is Translin-1 (220 aa).

Belongs to the translin family. As to quaternary structure, forms an octameric ring-shaped structure, which is capable of binding DNA or RNA.

It localises to the cytoplasm. Its subcellular location is the nucleus. Its function is as follows. DNA-binding protein that specifically recognizes consensus sequences at the breakpoint junctions in chromosomal translocations. Selectively binds single-stranded d(GT)n and d(GTT)n microsatellite repeats. Has much higher affinities for the homologous RNA sequences (GU)n and (GUU)n. Does not bind double-stranded DNA. Has a role in meiosis. The protein is Translin-1 (tsn1) of Schizosaccharomyces pombe (strain 972 / ATCC 24843) (Fission yeast).